We begin with the raw amino-acid sequence, 496 residues long: Cytochrome P450 monooxygenase claT (496 aa).

A helical transmembrane segment spans residues 2–22 (LSLIVEATLLLVVLVLSAHYV). Residue Cys-423 participates in heme binding.

It belongs to the cytochrome P450 family. Heme serves as cofactor.

It localises to the membrane. It catalyses the reaction wigandol + 4 reduced [NADPH--hemoprotein reductase] + 4 O2 = arnebinol A + 4 oxidized [NADPH--hemoprotein reductase] + 6 H2O + 4 H(+). The catalysed reaction is arnebinol A + reduced [NADPH--hemoprotein reductase] + O2 = clavilactone A + oxidized [NADPH--hemoprotein reductase] + H2O + H(+). It carries out the reaction (2E)-geranylhydroquinone + reduced [NADPH--hemoprotein reductase] + O2 = isoalliodorol + oxidized [NADPH--hemoprotein reductase] + H2O + H(+). Its pathway is secondary metabolite biosynthesis; terpenoid biosynthesis. In terms of biological role, cytochrome P450 monooxygenase; part of the gene cluster that mediates the biosynthesis of clavilactone A, a meroterpenoid that features a unique benzo-fused ten-membered carbocyclic ring unit with an alpha,beta-epoxy-gamma-lactone moiety, forming an intriguing 10/5/3 tricyclic nested skeleton. ClaR, ClaS and ClaT are sufficient to produce clavilactone A. Within the pathway, claT acts as a multifunctional cytochrome P450 monooxygenase that catalyzes a ten-electron oxidation to accomplish the biosynthesis of the 10/5/3 tricyclic nested skeleton in clavilactones. The biosynthesis begins with the prenyltransferase claS that transfers geranyl pyrophosphate (GPP) to hydroquinone to produces geranylhydroquinone. The cytochrome P450 monooxygenase claR then catalyzes the diradical coupling reaction between the intramolecular hydroquinone and allyl moieties to form the benzo-fused ten-membered carbocyclic ring unit of wigantol. Finally the cytochrome P450 monooxygenase claT exquisitely and stereoselectively assembles the alpha,beta-epoxy-gamma-lactone moiety, producing clavilactone A via arnebinol A. The chain is Cytochrome P450 monooxygenase claT from Ampulloclitocybe clavipes (Club foot).